Consider the following 547-residue polypeptide: Phosphatidylinositol/phosphatidylcholine transfer protein SFH7 (547 aa).

In terms of domain architecture, CRAL-TRIO spans 130–304 (EIDQVLKHYP…FFGGLCTCAD (175 aa)). Positions 464 to 526 (SSEYVIMVKR…KKALDETMVN (63 aa)) form a coiled coil.

This sequence belongs to the SFH family.

The protein resides in the golgi apparatus membrane. Its subcellular location is the cell membrane. Its function is as follows. Required for transport of secretory proteins from the Golgi complex. Catalyzes the transfer of phosphatidylinositol and phosphatidylcholine between membranes in vitro. The polypeptide is Phosphatidylinositol/phosphatidylcholine transfer protein SFH7 (SFH7) (Arabidopsis thaliana (Mouse-ear cress)).